The sequence spans 161 residues: Cyclic pyranopterin monophosphate synthase (161 aa).

Residues 75–77 (MCH) and 115–116 (ME) contribute to the substrate site. Aspartate 130 is a catalytic residue.

It belongs to the MoaC family. In terms of assembly, homohexamer; trimer of dimers.

The enzyme catalyses (8S)-3',8-cyclo-7,8-dihydroguanosine 5'-triphosphate = cyclic pyranopterin phosphate + diphosphate. Its pathway is cofactor biosynthesis; molybdopterin biosynthesis. Functionally, catalyzes the conversion of (8S)-3',8-cyclo-7,8-dihydroguanosine 5'-triphosphate to cyclic pyranopterin monophosphate (cPMP). In Bacillus cereus (strain ATCC 10987 / NRS 248), this protein is Cyclic pyranopterin monophosphate synthase.